The sequence spans 389 residues: Succinate--CoA ligase [ADP-forming] subunit beta (389 aa).

The region spanning lysine 9–glutamate 244 is the ATP-grasp domain. ATP is bound by residues lysine 46, glycine 53–glycine 55, glutamate 99, alanine 102, and glutamate 107. Mg(2+)-binding residues include asparagine 199 and aspartate 213. Substrate contacts are provided by residues asparagine 264 and glycine 321–methionine 323.

This sequence belongs to the succinate/malate CoA ligase beta subunit family. Heterotetramer of two alpha and two beta subunits. The cofactor is Mg(2+).

The catalysed reaction is succinate + ATP + CoA = succinyl-CoA + ADP + phosphate. It catalyses the reaction GTP + succinate + CoA = succinyl-CoA + GDP + phosphate. It functions in the pathway carbohydrate metabolism; tricarboxylic acid cycle; succinate from succinyl-CoA (ligase route): step 1/1. Its function is as follows. Succinyl-CoA synthetase functions in the citric acid cycle (TCA), coupling the hydrolysis of succinyl-CoA to the synthesis of either ATP or GTP and thus represents the only step of substrate-level phosphorylation in the TCA. The beta subunit provides nucleotide specificity of the enzyme and binds the substrate succinate, while the binding sites for coenzyme A and phosphate are found in the alpha subunit. The protein is Succinate--CoA ligase [ADP-forming] subunit beta of Polynucleobacter asymbioticus (strain DSM 18221 / CIP 109841 / QLW-P1DMWA-1) (Polynucleobacter necessarius subsp. asymbioticus).